The following is a 1031-amino-acid chain: MMS19 nucleotide excision repair protein homolog (1031 aa).

Ala-2 is subject to N-acetylalanine. HEAT repeat units lie at residues 867–905 (QRFF…RLPK), 909–947 (LPEL…EAPQ), 950–988 (SLHV…LPTS), and 991–1029 (LPYK…LGSP). Residue Ser-1028 is modified to Phosphoserine.

It belongs to the MET18/MMS19 family. As to quaternary structure, component of the CIA complex. In the CIA complex, interacts directly with CIAO2B and CIAO3. Component of the MMXD complex, composed of CIAO1, ERCC2, CIAO2B, MMS19 and SLC25A5. Interacts with CIAO2B; the interaction is direct. Interacts with ERCC2/XPD; the interaction is direct. Interacts with ERCC3/XPB and NCOA3/RAC3. Interacts with RTEL1; the interaction mediates the association of RTEL1 with the CIA complex. Interacts with BRIP1. Interacts with KIF4A; the interaction facilitates the transfer of Fe-S clusters to KIF4A to ensure proper localization of KIF4A to the mitotic machinery components. Interacts with CCDC117; the interaction is indirect. Ubiquitinated; undergoes 'Lys-48'-linked polyubiquitination. Ubiquitously expressed with higher expression in testis.

The protein resides in the nucleus. Its subcellular location is the cytoplasm. It is found in the cytoskeleton. The protein localises to the spindle. Key component of the cytosolic iron-sulfur protein assembly (CIA) complex, a multiprotein complex that mediates the incorporation of iron-sulfur cluster into apoproteins specifically involved in DNA metabolism and genomic integrity. In the CIA complex, MMS19 acts as an adapter between early-acting CIA components and a subset of cellular target Fe/S proteins such as ERCC2/XPD, FANCJ and RTEL1, thereby playing a key role in nucleotide excision repair (NER), homologous recombination-mediated double-strand break DNA repair, DNA replication and RNA polymerase II (POL II) transcription. As a CIA complex component and in collaboration with CIAO1 and CIAO2, binds to and facilitates the assembly of most cytosolic-nuclear Fe/S proteins. As part of the mitotic spindle-associated MMXD complex, plays a role in chromosome segregation, probably by facilitating iron-sulfur cluster assembly into ERCC2/XPD. Together with CIAO2, facilitates the transfer of Fe-S clusters to the motor protein KIF4A, which ensures proper localization of KIF4A to mitotic machinery components to promote the progression of mitosis. Indirectly acts as a transcriptional coactivator of estrogen receptor (ER), via its role in iron-sulfur insertion into some component of the TFIIH-machinery. This is MMS19 nucleotide excision repair protein homolog from Mus musculus (Mouse).